The sequence spans 523 residues: 3-hydroxybenzoate--CoA ligase (523 aa).

It belongs to the ATP-dependent AMP-binding enzyme family. Benzoate-CoA ligase subfamily.

The enzyme catalyses 3-hydroxybenzoate + ATP + CoA = 3-hydroxybenzoyl-CoA + AMP + diphosphate. The catalysed reaction is 4-hydroxybenzoate + ATP + CoA = 4-hydroxybenzoyl-CoA + AMP + diphosphate. Functionally, ligase involved in the anaerobic degradation of 3-hydroxybenzoate (3OHBz). Catalyzes the activation of 3-hydroxybenzoate to 3-hydroxybenzoyl-CoA. Also shows high activity with protocatechuate and 4-hydroxybenzoate. Exhibits lower activity with benzoate, but cannot use 2-hydroxybenzoate or benzoate analogs containing other substituents at the ortho position, such as 2-aminobenzoate (anthranilate). This Aromatoleum sp. (strain CIB) (Azoarcus sp. (strain CIB)) protein is 3-hydroxybenzoate--CoA ligase.